We begin with the raw amino-acid sequence, 140 residues long: Alpha-lactalbumin (140 aa).

An N-terminal signal peptide occupies residues 1–19 (MMSLLSLLLLGIALPATQA). In terms of domain architecture, C-type lysozyme spans 20–140 (IDYRKCQASQ…CIEDLDQWRC (121 aa)). Cystine bridges form between C25-C140, C47-C131, C80-C96, and C92-C110. N63 carries N-linked (GlcNAc...) asparagine glycosylation. Ca(2+) is bound by residues K98, D101, D103, D106, and D107.

Belongs to the glycosyl hydrolase 22 family. Lactose synthase (LS) is a heterodimer of a catalytic component, beta1,4-galactosyltransferase (beta4Gal-T1) and a regulatory component, alpha-lactalbumin (LA). Mammary gland specific. Secreted in milk.

It localises to the secreted. Regulatory subunit of lactose synthase, changes the substrate specificity of galactosyltransferase in the mammary gland making glucose a good acceptor substrate for this enzyme. This enables LS to synthesize lactose, the major carbohydrate component of milk. In other tissues, galactosyltransferase transfers galactose onto the N-acetylglucosamine of the oligosaccharide chains in glycoproteins. This chain is Alpha-lactalbumin (LALBA), found in Notamacropus eugenii (Tammar wallaby).